Here is a 740-residue protein sequence, read N- to C-terminus: Ion-translocating oxidoreductase complex subunit C (740 aa).

2 4Fe-4S ferredoxin-type domains span residues 369–397 and 407–436; these read GEPQ…QQLY and KATT…VQYF. [4Fe-4S] cluster is bound by residues Cys-377, Cys-380, Cys-383, Cys-387, Cys-416, Cys-419, Cys-422, and Cys-426. The interval 602 to 716 is disordered; sequence KLEQQQANAE…EPEEQVDPRK (115 aa).

The protein belongs to the 4Fe4S bacterial-type ferredoxin family. RnfC subfamily. The complex is composed of six subunits: RsxA, RsxB, RsxC, RsxD, RsxE and RsxG. The cofactor is [4Fe-4S] cluster.

It is found in the cell inner membrane. Part of a membrane-bound complex that couples electron transfer with translocation of ions across the membrane. Required to maintain the reduced state of SoxR. This chain is Ion-translocating oxidoreductase complex subunit C, found in Escherichia coli O139:H28 (strain E24377A / ETEC).